Consider the following 264-residue polypeptide: Thiazole synthase (264 aa).

Catalysis depends on Lys100, which acts as the Schiff-base intermediate with DXP. 1-deoxy-D-xylulose 5-phosphate is bound by residues Gly161, 187–188, and 209–210; these read AG and NT.

Belongs to the ThiG family. As to quaternary structure, homotetramer. Forms heterodimers with either ThiH or ThiS.

It localises to the cytoplasm. It catalyses the reaction [ThiS sulfur-carrier protein]-C-terminal-Gly-aminoethanethioate + 2-iminoacetate + 1-deoxy-D-xylulose 5-phosphate = [ThiS sulfur-carrier protein]-C-terminal Gly-Gly + 2-[(2R,5Z)-2-carboxy-4-methylthiazol-5(2H)-ylidene]ethyl phosphate + 2 H2O + H(+). The protein operates within cofactor biosynthesis; thiamine diphosphate biosynthesis. Catalyzes the rearrangement of 1-deoxy-D-xylulose 5-phosphate (DXP) to produce the thiazole phosphate moiety of thiamine. Sulfur is provided by the thiocarboxylate moiety of the carrier protein ThiS. In vitro, sulfur can be provided by H(2)S. In Nitrosospira multiformis (strain ATCC 25196 / NCIMB 11849 / C 71), this protein is Thiazole synthase.